The primary structure comprises 329 residues: tRNA uridine(34) hydroxylase (329 aa).

Residues 123 to 217 (SDPDVILVDT…YLEEVPEEES (95 aa)) enclose the Rhodanese domain. The Cysteine persulfide intermediate role is filled by Cys-177. Residues 285–329 (REKQVQLSNARGETHVGGDAAHLIDQRKKEKLAHKEQQRSGKKAK) form a disordered region. Positions 296–323 (GETHVGGDAAHLIDQRKKEKLAHKEQQR) are enriched in basic and acidic residues.

Belongs to the TrhO family.

The catalysed reaction is uridine(34) in tRNA + AH2 + O2 = 5-hydroxyuridine(34) in tRNA + A + H2O. Its function is as follows. Catalyzes oxygen-dependent 5-hydroxyuridine (ho5U) modification at position 34 in tRNAs. This Vibrio atlanticus (strain LGP32) (Vibrio splendidus (strain Mel32)) protein is tRNA uridine(34) hydroxylase.